The following is a 968-amino-acid chain: Isoleucine--tRNA ligase (968 aa).

The short motif at 68–78 (PYANGALHMGH) is the 'HIGH' region element. Position 584 (E584) interacts with L-isoleucyl-5'-AMP. A 'KMSKS' region motif is present at residues 625–629 (KMSKS). K628 provides a ligand contact to ATP. Zn(2+) contacts are provided by C938, C941, C958, and C961.

It belongs to the class-I aminoacyl-tRNA synthetase family. IleS type 1 subfamily. Monomer. Zn(2+) is required as a cofactor.

It is found in the cytoplasm. The catalysed reaction is tRNA(Ile) + L-isoleucine + ATP = L-isoleucyl-tRNA(Ile) + AMP + diphosphate. Functionally, catalyzes the attachment of isoleucine to tRNA(Ile). As IleRS can inadvertently accommodate and process structurally similar amino acids such as valine, to avoid such errors it has two additional distinct tRNA(Ile)-dependent editing activities. One activity is designated as 'pretransfer' editing and involves the hydrolysis of activated Val-AMP. The other activity is designated 'posttransfer' editing and involves deacylation of mischarged Val-tRNA(Ile). The protein is Isoleucine--tRNA ligase of Synechococcus sp. (strain CC9311).